Consider the following 240-residue polypeptide: uncharacterized protein (240 aa).

An N-terminal signal peptide occupies residues 1–18 (MTRYTYLFILQIISCSFA). A glycan (N-linked (GlcNAc...) asparagine) is linked at N127. A helical transmembrane segment spans residues 215–235 (GFISSSQLPQFVYLIVFTIIG).

The protein resides in the membrane. This is an uncharacterized protein from Caenorhabditis elegans.